A 359-amino-acid chain; its full sequence is Apelin receptor B (359 aa).

At 1-36 (MNAMDNMTADYSPDYFDDAVNSSMCEYDEWEPSYSL) the chain is on the extracellular side. Asn-6 and Asn-21 each carry an N-linked (GlcNAc...) asparagine glycan. 2 disulfide bridges follow: Cys-25/Cys-288 and Cys-107/Cys-186. A helical transmembrane segment spans residues 37–57 (IPVLYMLIFILGLTGNGVVIF). At 58-75 (TVWRAQSKRRAADVYIGN) the chain is on the cytoplasmic side. The helical transmembrane segment at 76–96 (LALADLTFVVTLPLWAVYTAL) threads the bilayer. At 97–108 (GYHWPFGVALCK) the chain is on the extracellular side. A helical membrane pass occupies residues 109-129 (ISSYVVLLNMYASVFCLTCLS). The Cytoplasmic segment spans residues 130–151 (LDRYMAIVHSLTSTQLRTRGHM). A helical transmembrane segment spans residues 152-172 (RASLTAIWLLSGVLAAPTLLF). Over 173–213 (RTTVYDVETNRTSCAMDFNLVVSQPGQETYWIAGLSISSTA) the chain is Extracellular. Residue Asn-182 is glycosylated (N-linked (GlcNAc...) asparagine). A helical membrane pass occupies residues 214-234 (LGFLIPLLAMMVCYGFIGCTV). The Cytoplasmic portion of the chain corresponds to 235–251 (TRHFNSLRKEDQRKRRL). The helical transmembrane segment at 252-272 (LKIITTLVVVFAACWMPFHVV) threads the bilayer. Residues 273-286 (KTMDALSYLNLAPD) lie on the Extracellular side of the membrane. Residues 287-307 (SCTFLNLLLLAHPYATCLAYV) traverse the membrane as a helical segment. Residues 308–359 (NSCLNPLLYAFFDLRFRSQCLCLLNLKKALHASPASSLSSQKTEAQSLATKV) are Cytoplasmic-facing.

It belongs to the G-protein coupled receptor 1 family. As to expression, mesendodermal expression at the blastoderm margin appears by 4.5 hpf. At early gastrulation, expression is maintained ventrolaterally while expression in dorsal cells and random deep cells declines. During gastrulation and segmentation, expression is maintained in adaxial, intermediate, and lateral plate mesoderm. During late segmentation, expressed in several regions including the forming heart. By 24 hpf, expressed in the dorsal aorta, caudal vein, and intersomitic blood vessels.

It localises to the cell membrane. G protein-coupled receptor for peptide hormones apelin (apln) and apelin receptor early endogenous ligand (apela), that plays a role in the regulation of normal cardiovascular function and fluid homeostasis. When acting as apelin receptor, activates both G(i) protein pathway that inhibits adenylate cyclase activity, and the beta-arrestin pathway that promotes internalization of the receptor. Also functions as mechanoreceptor that is activated by pathological stimuli in a G-protein-independent fashion to induce beta-arrestin signaling, hence eliciting cardiac hypertrophy. However, the presence of apelin ligand blunts cardiac hypertrophic induction from APLNR/APJ on response to pathological stimuli. Plays a key role in early development such as gastrulation, blood vessels formation and heart morphogenesis by acting as a receptor for apela hormone, promoting endoderm and mesendoderm cell migration and regulating the migration of cells fated to become myocardial progenitors, respectively. Positively regulates angioblast migration toward the embryonic midline, i.e. the position of the future vessel formation, during vasculogenesis. May promote sinus venosus (SV)-derived endothelial cells migration into the developing heart to promote coronary blood vessel development. Required for cardiovascular development, particularly for intersomitic vein angiogenesis by acting as a receptor for apln hormone. Plays a role in various processes in adults such as regulation of blood vessel formation, blood pressure, heart contractility and heart failure. Acts redundantly with agtrl1a in heart development. In terms of biological role, g protein-coupled receptor for peptide hormones apelin (APLN) and apelin receptor early endogenous ligand (APELA/ELA), that plays a role in the regulation of normal cardiovascular function and fluid homeostasis. When acting as apelin receptor, activates both G(i) protein pathway that inhibits adenylate cyclase activity, and the beta-arrestin pathway that promotes internalization of the receptor. APLNR/APJ also functions as mechanoreceptor that is activated by pathological stimuli in a G-protein-independent fashion to induce beta-arrestin signaling, hence eliciting cardiac hypertrophy. Plays a key role in early development such as gastrulation, blood vessels formation and heart morphogenesis by acting as a APELA receptor. May promote angioblast migration toward the embryonic midline, i.e. the position of the future vessel formation, during vasculogenesis. Promotes sinus venosus (SV)-derived endothelial cells migration into the developing heart to promote coronary blood vessel development. Also plays a role in various processes in adults such as regulation of blood vessel formation, blood pressure, heart contractility and heart failure. The polypeptide is Apelin receptor B (aplnrb) (Danio rerio (Zebrafish)).